Here is a 697-residue protein sequence, read N- to C-terminus: Elongation factor G (697 aa).

The 276-residue stretch at 10–285 (AKTRNIGIMA…GVIDYLPSPL (276 aa)) folds into the tr-type G domain. GTP-binding positions include 19–26 (AHIDAGKT), 83–87 (DTPGH), and 137–140 (NKMD).

The protein belongs to the TRAFAC class translation factor GTPase superfamily. Classic translation factor GTPase family. EF-G/EF-2 subfamily.

The protein localises to the cytoplasm. Functionally, catalyzes the GTP-dependent ribosomal translocation step during translation elongation. During this step, the ribosome changes from the pre-translocational (PRE) to the post-translocational (POST) state as the newly formed A-site-bound peptidyl-tRNA and P-site-bound deacylated tRNA move to the P and E sites, respectively. Catalyzes the coordinated movement of the two tRNA molecules, the mRNA and conformational changes in the ribosome. The chain is Elongation factor G from Lactobacillus helveticus (strain DPC 4571).